The chain runs to 761 residues: Zinc finger protein 711 (761 aa).

C2H2-type zinc fingers lie at residues 383–408 (YPCH…HPDH), 414–436 (YQCT…LESH), 476–499 (HKCK…LAVH), 505–527 (HVCV…MRTH), and 533–556 (FHCQ…KSKH). A C2H2-type 6; atypical zinc finger spans residues 562–584 (FKCGHCPQAFADDKELQRHAEIF). 3 residues coordinate Zn(2+): C564, C567, and H580. 6 consecutive C2H2-type zinc fingers follow at residues 590–613 (HQCP…ISVH), 619–641 (HKCD…SETH), 647–670 (HQCR…LSVH), 676–698 (FKCK…MKTH), 704–727 (YQCQ…ISIH), and 733–755 (HRCD…IMRH).

The protein belongs to the krueppel C2H2-type zinc-finger protein family. Present in ovary and brain but not in other tissues (at protein level).

It is found in the nucleus. It localises to the cytoplasm. Transcription regulator required for brain development. Probably acts as a transcription factor that binds to the promoter of target genes, leading to activate their expression. In Danio rerio (Zebrafish), this protein is Zinc finger protein 711 (znf711).